A 279-amino-acid polypeptide reads, in one-letter code: Pantothenate synthetase (279 aa).

27-34 (MGYLHEGH) is a binding site for ATP. H34 serves as the catalytic Proton donor. Residue Q58 participates in (R)-pantoate binding. Position 58 (Q58) interacts with beta-alanine. 144-147 (GKKD) contacts ATP. Q150 serves as a coordination point for (R)-pantoate. Residues V173 and 181-184 (MSSR) contribute to the ATP site.

This sequence belongs to the pantothenate synthetase family. As to quaternary structure, homodimer.

It localises to the cytoplasm. It carries out the reaction (R)-pantoate + beta-alanine + ATP = (R)-pantothenate + AMP + diphosphate + H(+). It participates in cofactor biosynthesis; (R)-pantothenate biosynthesis; (R)-pantothenate from (R)-pantoate and beta-alanine: step 1/1. Catalyzes the condensation of pantoate with beta-alanine in an ATP-dependent reaction via a pantoyl-adenylate intermediate. The chain is Pantothenate synthetase from Citrifermentans bemidjiense (strain ATCC BAA-1014 / DSM 16622 / JCM 12645 / Bem) (Geobacter bemidjiensis).